Consider the following 330-residue polypeptide: Aspartate--ammonia ligase (330 aa).

It belongs to the class-II aminoacyl-tRNA synthetase family. AsnA subfamily. As to quaternary structure, homodimer.

The protein resides in the cytoplasm. It carries out the reaction L-aspartate + NH4(+) + ATP = L-asparagine + AMP + diphosphate + H(+). Its pathway is amino-acid biosynthesis; L-asparagine biosynthesis; L-asparagine from L-aspartate (ammonia route): step 1/1. This is Aspartate--ammonia ligase from Salmonella typhi.